We begin with the raw amino-acid sequence, 376 residues long: GDSL esterase/lipase 2 (376 aa).

An N-terminal signal peptide occupies residues 1-25 (MENSRSTLIIFFAYTTIILIGSINC). Asn-36 is a glycosylation site (N-linked (GlcNAc...) asparagine). Ser-46 acts as the Nucleophile in catalysis. N-linked (GlcNAc...) asparagine glycosylation is found at Asn-186 and Asn-205. Catalysis depends on residues Asp-340 and His-343. The N-linked (GlcNAc...) asparagine glycan is linked to Asn-362.

This sequence belongs to the 'GDSL' lipolytic enzyme family. Expressed seedlings, roots and stems.

The protein resides in the secreted. Functionally, involved in the resistance to the necrotropic bacteria Erwinia carotovora, probably via negative regulation of auxin signaling. Possesses lipase and antimicrobial activities, inhibiting germination of fungal spores (e.g. Alternaria brassicicola). This is GDSL esterase/lipase 2 (GLIP2) from Arabidopsis thaliana (Mouse-ear cress).